The sequence spans 185 residues: Photosystem I assembly protein Ycf4 (185 aa).

The next 2 helical transmembrane spans lie at 20–40 (GNFF…SVGA) and 57–77 (ILFF…LFIS).

This sequence belongs to the Ycf4 family.

It localises to the plastid. The protein localises to the chloroplast thylakoid membrane. Its function is as follows. Seems to be required for the assembly of the photosystem I complex. This Lolium perenne (Perennial ryegrass) protein is Photosystem I assembly protein Ycf4.